The chain runs to 165 residues: Sorting nexin-12 (165 aa).

The tract at residues 1-20 (MSDTAVADTRRLNSKPQDLT) is disordered. S2 carries the post-translational modification N-acetylserine. Y23 is modified (phosphotyrosine). A PX domain is found at 28–151 (NFLEIDIFNP…HMFLQEEAID (124 aa)). A 1,2-diacyl-sn-glycero-3-phospho-(1D-myo-inositol-3-phosphate)-binding residues include R71, S73, K96, and R118. Residue S73 is modified to Phosphoserine.

It belongs to the sorting nexin family.

The protein localises to the membrane. Its function is as follows. May be involved in several stages of intracellular trafficking. This Mus musculus (Mouse) protein is Sorting nexin-12 (Snx12).